The chain runs to 160 residues: Large ribosomal subunit protein uL16 (160 aa).

Polar residues predominate over residues 138–148; the sequence is KNLEVSSQENT. A disordered region spans residues 138–160; it reads KNLEVSSQENTKNNKESQEEVKQ. Residues 149–160 show a composition bias toward basic and acidic residues; sequence KNNKESQEEVKQ.

This sequence belongs to the universal ribosomal protein uL16 family. As to quaternary structure, part of the 50S ribosomal subunit.

Functionally, binds 23S rRNA and is also seen to make contacts with the A and possibly P site tRNAs. This is Large ribosomal subunit protein uL16 from Prochlorococcus marinus (strain MIT 9312).